We begin with the raw amino-acid sequence, 122 residues long: UPF0102 protein CPE1705 (122 aa).

This sequence belongs to the UPF0102 family.

This Clostridium perfringens (strain 13 / Type A) protein is UPF0102 protein CPE1705.